The primary structure comprises 253 residues: 5-oxoprolinase subunit A (253 aa).

It belongs to the LamB/PxpA family. As to quaternary structure, forms a complex composed of PxpA, PxpB and PxpC.

It carries out the reaction 5-oxo-L-proline + ATP + 2 H2O = L-glutamate + ADP + phosphate + H(+). Its function is as follows. Catalyzes the cleavage of 5-oxoproline to form L-glutamate coupled to the hydrolysis of ATP to ADP and inorganic phosphate. The sequence is that of 5-oxoprolinase subunit A from Bacillus cereus (strain ZK / E33L).